The chain runs to 650 residues: GATA zinc finger domain-containing protein 11 (650 aa).

Residues 16-79 (LYNNTNTNSN…NSSNSLSSSF (64 aa)) show a composition bias toward low complexity. 4 disordered regions span residues 16-96 (LYNN…SGYN), 111-181 (KRSN…TTPL), 221-335 (NNSN…NNNK), and 409-515 (RIFG…NKRK). A compositionally biased stretch (polar residues) spans 116–129 (LDDNMSVPTLQNFT). Low complexity-rich tracts occupy residues 130–180 (NNNN…PTTP) and 221–260 (NNSN…NNNN). A compositionally biased stretch (polar residues) spans 261–272 (QSIVPQSIHLQS). Residues 273-334 (TTPQIQPLSL…NNSYNTNNNN (62 aa)) show a composition bias toward low complexity. The segment covering 425–434 (RPRRFRKSKV) has biased composition (basic residues). A compositionally biased stretch (low complexity) spans 442 to 511 (HNNNNNNINN…GNGNTNSTNN (70 aa)). The GATA-type zinc finger occupies 522 to 547 (CTSCGTTSSPEWRKGPAGNQSLCNAC). Residues 619–650 (QQQQQQQQQQQNHHHQQLQQQQQQQQQQQLHH) form a disordered region.

In terms of biological role, transcription factor that regulates morphogenetic cell movement during development. This chain is GATA zinc finger domain-containing protein 11 (gtaK), found in Dictyostelium discoideum (Social amoeba).